Reading from the N-terminus, the 126-residue chain is Small ribosomal subunit protein uS13 (126 aa).

The interval His-92–Lys-126 is disordered. Residues Gln-101–Lys-126 show a composition bias toward basic residues.

Belongs to the universal ribosomal protein uS13 family. As to quaternary structure, part of the 30S ribosomal subunit. Forms a loose heterodimer with protein S19. Forms two bridges to the 50S subunit in the 70S ribosome.

Its function is as follows. Located at the top of the head of the 30S subunit, it contacts several helices of the 16S rRNA. In the 70S ribosome it contacts the 23S rRNA (bridge B1a) and protein L5 of the 50S subunit (bridge B1b), connecting the 2 subunits; these bridges are implicated in subunit movement. Contacts the tRNAs in the A and P-sites. This is Small ribosomal subunit protein uS13 from Nostoc sp. (strain PCC 7120 / SAG 25.82 / UTEX 2576).